We begin with the raw amino-acid sequence, 645 residues long: Threonine--tRNA ligase (645 aa).

The TGS domain occupies 1–61; the sequence is MIKITLPDGS…TSDSTVQLLT (61 aa). The catalytic stretch occupies residues 242–541; it reads DHRKLGKELE…LIEHVAGNFP (300 aa). 3 residues coordinate Zn(2+): Cys337, His388, and His518.

It belongs to the class-II aminoacyl-tRNA synthetase family. As to quaternary structure, homodimer. Zn(2+) is required as a cofactor.

It localises to the cytoplasm. It catalyses the reaction tRNA(Thr) + L-threonine + ATP = L-threonyl-tRNA(Thr) + AMP + diphosphate + H(+). Functionally, catalyzes the attachment of threonine to tRNA(Thr) in a two-step reaction: L-threonine is first activated by ATP to form Thr-AMP and then transferred to the acceptor end of tRNA(Thr). Also edits incorrectly charged L-seryl-tRNA(Thr). This chain is Threonine--tRNA ligase, found in Cytophaga hutchinsonii (strain ATCC 33406 / DSM 1761 / CIP 103989 / NBRC 15051 / NCIMB 9469 / D465).